Reading from the N-terminus, the 252-residue chain is Large ribosomal subunit protein uL4 (252 aa).

This sequence belongs to the universal ribosomal protein uL4 family. Part of the 50S ribosomal subunit.

Its function is as follows. One of the primary rRNA binding proteins, this protein initially binds near the 5'-end of the 23S rRNA. It is important during the early stages of 50S assembly. It makes multiple contacts with different domains of the 23S rRNA in the assembled 50S subunit and ribosome. Forms part of the polypeptide exit tunnel. This chain is Large ribosomal subunit protein uL4, found in Methanocaldococcus jannaschii (strain ATCC 43067 / DSM 2661 / JAL-1 / JCM 10045 / NBRC 100440) (Methanococcus jannaschii).